The primary structure comprises 215 residues: Uracil phosphoribosyltransferase (215 aa).

5-phospho-alpha-D-ribose 1-diphosphate is bound by residues arginine 77, arginine 102, and aspartate 129–serine 137. Residues isoleucine 193 and glycine 198–alanine 200 each bind uracil. Aspartate 199 contributes to the 5-phospho-alpha-D-ribose 1-diphosphate binding site.

It belongs to the UPRTase family. Requires Mg(2+) as cofactor.

The catalysed reaction is UMP + diphosphate = 5-phospho-alpha-D-ribose 1-diphosphate + uracil. It participates in pyrimidine metabolism; UMP biosynthesis via salvage pathway; UMP from uracil: step 1/1. Its activity is regulated as follows. Allosterically activated by GTP. Functionally, catalyzes the conversion of uracil and 5-phospho-alpha-D-ribose 1-diphosphate (PRPP) to UMP and diphosphate. The chain is Uracil phosphoribosyltransferase from Corynebacterium urealyticum (strain ATCC 43042 / DSM 7109).